Reading from the N-terminus, the 206-residue chain is Ribosomal RNA large subunit methyltransferase E (206 aa).

Positions 61, 63, 81, 97, and 122 each coordinate S-adenosyl-L-methionine. Residue Lys162 is the Proton acceptor of the active site.

This sequence belongs to the class I-like SAM-binding methyltransferase superfamily. RNA methyltransferase RlmE family.

The protein resides in the cytoplasm. The enzyme catalyses uridine(2552) in 23S rRNA + S-adenosyl-L-methionine = 2'-O-methyluridine(2552) in 23S rRNA + S-adenosyl-L-homocysteine + H(+). Its function is as follows. Specifically methylates the uridine in position 2552 of 23S rRNA at the 2'-O position of the ribose in the fully assembled 50S ribosomal subunit. The chain is Ribosomal RNA large subunit methyltransferase E from Neisseria meningitidis serogroup C (strain 053442).